The primary structure comprises 277 residues: 4-hydroxy-3-prenylphenylpyruvate oxygenase/4-hydroxy-3-prenylbenzoate synthase (277 aa).

Belongs to the aldolase class II family. In terms of assembly, homotetramer. Fe(2+) serves as cofactor.

The catalysed reaction is 3-dimethylallyl-4-hydroxyphenylpyruvate + O2 = 3-dimethylallyl-4-hydroxymandelate + CO2. It catalyses the reaction 3-dimethylallyl-4-hydroxymandelate + O2 = 3-dimethylallyl-4-hydroxybenzoate + CO2 + H2O. The protein operates within antibiotic biosynthesis. Its activity is regulated as follows. Activated by ascorbate. In terms of biological role, involved in the biosynthesis of ring A of the aminocoumarin antibiotic clorobiocin. Catalyzes two consecutive oxidative decarboxylations of 3-dimethylallyl-4-hydroxyphenylpyruvate (3DMA-4HPP) to yield 3-dimethylallyl-4-hydroxybenzoate (3DMA-4HB) via the 3-dimethylallyl-4-hydroxymandelic acid (3DMA-4HMA) intermediate. This chain is 4-hydroxy-3-prenylphenylpyruvate oxygenase/4-hydroxy-3-prenylbenzoate synthase, found in Streptomyces roseochromogenus subsp. oscitans.